A 303-amino-acid chain; its full sequence is N-acetyl-D-glucosamine kinase (303 aa).

Residues 4–11 and 133–140 each bind ATP; these read GFDIGGTK and GVGGGLIF. The Zn(2+) site is built by His-157, Cys-177, Cys-179, and Cys-184.

The protein belongs to the ROK (NagC/XylR) family. NagK subfamily.

The enzyme catalyses N-acetyl-D-glucosamine + ATP = N-acetyl-D-glucosamine 6-phosphate + ADP + H(+). It functions in the pathway cell wall biogenesis; peptidoglycan recycling. Catalyzes the phosphorylation of N-acetyl-D-glucosamine (GlcNAc) derived from cell-wall degradation, yielding GlcNAc-6-P. The polypeptide is N-acetyl-D-glucosamine kinase (Escherichia fergusonii (strain ATCC 35469 / DSM 13698 / CCUG 18766 / IAM 14443 / JCM 21226 / LMG 7866 / NBRC 102419 / NCTC 12128 / CDC 0568-73)).